The sequence spans 155 residues: Endoribonuclease YbeY (155 aa).

Zn(2+) contacts are provided by His-114, His-118, and His-124.

It belongs to the endoribonuclease YbeY family. It depends on Zn(2+) as a cofactor.

The protein localises to the cytoplasm. Its function is as follows. Single strand-specific metallo-endoribonuclease involved in late-stage 70S ribosome quality control and in maturation of the 3' terminus of the 16S rRNA. The protein is Endoribonuclease YbeY of Escherichia coli O157:H7.